The sequence spans 197 residues: Ribonuclease HII (197 aa).

Residues 3–192 (QLIAGVDEVG…VQLSLMQRGG (190 aa)) form the RNase H type-2 domain. A divalent metal cation-binding residues include D9, E10, and D101.

The protein belongs to the RNase HII family. Mn(2+) is required as a cofactor. Requires Mg(2+) as cofactor.

The protein localises to the cytoplasm. The enzyme catalyses Endonucleolytic cleavage to 5'-phosphomonoester.. Functionally, endonuclease that specifically degrades the RNA of RNA-DNA hybrids. The sequence is that of Ribonuclease HII from Pseudoalteromonas atlantica (strain T6c / ATCC BAA-1087).